We begin with the raw amino-acid sequence, 446 residues long: MEKYLSVTTLTKYLKMKFDKDPYLERVYLTGQVSNFRKRPTHQYFSLKDDHAVIQATIWSGIYQKLGFDLEEGMKINVIGRVQVYEPSGSYSIIIEKAEPDGVGALAIQFEQLKKKLTEEGLFQERFKQALPQFSKRIGVVTSRSGAVIRDIITTVSRRFPGVDILLYPTKVQGEGAAEEIARNIARANQRDDLDLLIIGRGGGSIEDLWAFNEEIVVRAIFESRLPVISSVGHETDVTLADFVADRRAATPTAAAELATPVTKLDVLTHLQNQEKRMATAVRNVLSKKQEALKKCSQSVIFRQPERLYDGYLQRLDQLQLRLKQSLRTRISDNKQLVQARTHQLVQLSPVTKIQRYQDRLGQLDKLLGSQMALVYDAKVAEAKRLSEALLMLDTSRIVARGYAIVKKEESIVDSVESLKKKDQVTLLMRDGQVELEVKDVKTKEI.

The protein belongs to the XseA family. Heterooligomer composed of large and small subunits.

Its subcellular location is the cytoplasm. The enzyme catalyses Exonucleolytic cleavage in either 5'- to 3'- or 3'- to 5'-direction to yield nucleoside 5'-phosphates.. Its function is as follows. Bidirectionally degrades single-stranded DNA into large acid-insoluble oligonucleotides, which are then degraded further into small acid-soluble oligonucleotides. The sequence is that of Exodeoxyribonuclease 7 large subunit from Streptococcus pneumoniae (strain ATCC 700669 / Spain 23F-1).